The chain runs to 872 residues: Protein SEY1 (872 aa).

Residues 1–749 (MVANGHFAGV…KRSAIGGITQ (749 aa)) are Cytoplasmic-facing. The GB1/RHD3-type G domain occupies 49 to 294 (GFNYHLISVF…IEGGIFLPEY (246 aa)). 59-66 (GSQSTGKS) lines the GTP pocket. Positions 482 to 504 (SNYQQELSLYQKDLENIGGQLRR) form a coiled coil. Residues 676–704 (LDKWIGHTPSSATPADEEDLTPIGGVDED) form a disordered region. A compositionally biased stretch (acidic residues) spans 690 to 704 (ADEEDLTPIGGVDED). The chain crosses the membrane as a helical span at residues 750–770 (VPLYFYGLLLALGWNEIVAVL). At 771–773 (RNP) the chain is on the lumenal side. A helical membrane pass occupies residues 774-794 (AYFLLLFVCAVTAYVTYQLNL). Over 795-872 (WGPIIKMTEA…IDDADDDDDF (78 aa)) the chain is Cytoplasmic. The tract at residues 849–872 (NRKSAGGFQNNRSHIDDADDDDDF) is disordered.

The protein belongs to the TRAFAC class dynamin-like GTPase superfamily. GB1/RHD3 GTPase family. RHD3 subfamily.

It localises to the endoplasmic reticulum membrane. In terms of biological role, cooperates with the reticulon proteins and tubule-shaping DP1 family proteins to generate and maintain the structure of the tubular endoplasmic reticulum network. Has GTPase activity, which is required for its function in ER organization. The sequence is that of Protein SEY1 from Paracoccidioides brasiliensis (strain Pb03).